A 122-amino-acid polypeptide reads, in one-letter code: ATP synthase epsilon chain (122 aa).

This sequence belongs to the ATPase epsilon chain family. As to quaternary structure, F-type ATPases have 2 components, CF(1) - the catalytic core - and CF(0) - the membrane proton channel. CF(1) has five subunits: alpha(3), beta(3), gamma(1), delta(1), epsilon(1). CF(0) has three main subunits: a, b and c.

The protein resides in the cell membrane. Produces ATP from ADP in the presence of a proton gradient across the membrane. This chain is ATP synthase epsilon chain, found in Rhodococcus opacus (strain B4).